The primary structure comprises 488 residues: Monothiol glutaredoxin-S17 (488 aa).

The 106-residue stretch at 2 to 107 (SGTVKDIVSK…LANKVGKVAG (106 aa)) folds into the Thioredoxin domain. Glutaredoxin domains follow at residues 154 to 256 (KSRL…GITT), 284 to 386 (RARL…GITG), and 391 to 488 (EDRL…TLSE). Lys-408 provides a ligand contact to glutathione. Residue Cys-416 coordinates [2Fe-2S] cluster. Glutathione is bound by residues Arg-445, Phe-457, and 470 to 471 (CD).

Belongs to the glutaredoxin family. CGFS subfamily. [2Fe-2S]-bridged holo-homodimer. Interacts in vitro with SUFE1, BOLA1, BOLA2 and BOLA4. Interacts in vivo only with BOLA2. Interacts with RGLG3 and RGLG4. In terms of processing, ubiquitinated at Lys-154. Polyubiquitinated by RGLG3 and RGLG4. Polyubiquitination of GRXS17 leads to its degradation by the proteasome.

The protein resides in the cytoplasm. Functionally, may only reduce GSH-thiol disulfides, but not protein disulfides. Participates probably to the maturation of iron-sulfur proteins and to the regulation of the redox state of the BOLA proteins. The GRXS17-BOLA2 heterodimer binds a labile, oxygen sensitive iron-sulfur cluster. The protein is Monothiol glutaredoxin-S17 of Arabidopsis thaliana (Mouse-ear cress).